A 347-amino-acid polypeptide reads, in one-letter code: Leucine-rich repeat-containing protein 69 (347 aa).

9 LRR repeats span residues 15-37 (NTKILTLNGKRITKMPSTLEKLP), 38-60 (NLKTLDLQNNSISKVCPELRTLT), 61-82 (QLTLLNLGNNHLQEVPEEIKYL), 84-105 (SLKNLHLFGNRICRIAPGVFNG), 108-129 (RLIMLNLNDNRLTSLPQEIGRL), 131-152 (SLTYLSLNRNNLTVIPKELCSL), 154-175 (HLSELHLNYNQIVYIPEEIKFL), 177-198 (NLQQLFLVRNNIEELPEEICHL), and 200-222 (KLRVLDIAGNVIQIFPAGFQNLR).

It belongs to the LRRC69 family.

This is Leucine-rich repeat-containing protein 69 (Lrrc69) from Mus musculus (Mouse).